An 85-amino-acid chain; its full sequence is U4-theraphotoxin-Hhn1e (85 aa).

The first 22 residues, 1-22 (MKVTLIAILTCAAVLVLHTTAA), serve as a signal peptide directing secretion. Residues 23–48 (EELEAESQLMEVGMPDTELAAVDEER) constitute a propeptide that is removed on maturation. Disulfide bonds link C52-C66, C56-C77, and C71-C82.

This sequence belongs to the neurotoxin 12 (Hwtx-2) family. 02 (Hwtx-2) subfamily. As to expression, expressed by the venom gland.

The protein resides in the secreted. Postsynaptic neurotoxin. In Cyriopagopus hainanus (Chinese bird spider), this protein is U4-theraphotoxin-Hhn1e.